The chain runs to 263 residues: 3-methyl-2-oxobutanoate hydroxymethyltransferase (263 aa).

The Mg(2+) site is built by Asp-45 and Asp-84. 3-methyl-2-oxobutanoate-binding positions include 45 to 46 (DS), Asp-84, and Lys-112. A Mg(2+)-binding site is contributed by Glu-114. Glu-180 acts as the Proton acceptor in catalysis.

The protein belongs to the PanB family. In terms of assembly, homodecamer; pentamer of dimers. Mg(2+) serves as cofactor.

The protein localises to the cytoplasm. It catalyses the reaction 3-methyl-2-oxobutanoate + (6R)-5,10-methylene-5,6,7,8-tetrahydrofolate + H2O = 2-dehydropantoate + (6S)-5,6,7,8-tetrahydrofolate. It functions in the pathway cofactor biosynthesis; (R)-pantothenate biosynthesis; (R)-pantoate from 3-methyl-2-oxobutanoate: step 1/2. In terms of biological role, catalyzes the reversible reaction in which hydroxymethyl group from 5,10-methylenetetrahydrofolate is transferred onto alpha-ketoisovalerate to form ketopantoate. The sequence is that of 3-methyl-2-oxobutanoate hydroxymethyltransferase from Enterobacter sp. (strain 638).